Here is a 109-residue protein sequence, read N- to C-terminus: C-X-C motif chemokine 13 (109 aa).

The first 22 residues, 1-22, serve as a signal peptide directing secretion; it reads MKFISTSLLLMLLVSSLSPVQG. 2 disulfide bridges follow: Cys33/Cys60 and Cys35/Cys76.

Belongs to the intercrine alpha (chemokine CxC) family. As to expression, highest levels in liver, followed by spleen, lymph node, appendix and stomach. Low levels in salivary gland, mammary gland and fetal spleen.

It is found in the secreted. In terms of biological role, chemotactic for B-lymphocytes but not for T-lymphocytes, monocytes and neutrophils. Does not induce calcium release in B-lymphocytes. Binds to BLR1/CXCR5. The sequence is that of C-X-C motif chemokine 13 (CXCL13) from Homo sapiens (Human).